The sequence spans 86 residues: MERNQRKVYTGRVVSDKMDKTITVLVETYKKDRLYGKRVKYSKKFKAHDENNSAKIGDIVRIQETRPLSKDKHFRLVEIVEEAVII.

The protein belongs to the universal ribosomal protein uS17 family. Part of the 30S ribosomal subunit.

Its function is as follows. One of the primary rRNA binding proteins, it binds specifically to the 5'-end of 16S ribosomal RNA. In Halalkalibacterium halodurans (strain ATCC BAA-125 / DSM 18197 / FERM 7344 / JCM 9153 / C-125) (Bacillus halodurans), this protein is Small ribosomal subunit protein uS17.